The primary structure comprises 358 residues: Feruloyl CoA ortho-hydroxylase F6H1-3 (358 aa).

A Fe2OG dioxygenase domain is found at 200 to 308 (TKESLLMGSK…RISVPIFVNP (109 aa)). Residue Y216 coordinates 2-oxoglutarate. Residues H231, D233, and H289 each coordinate Fe cation. 2-oxoglutarate is bound by residues R299 and S301.

This sequence belongs to the iron/ascorbate-dependent oxidoreductase family. Requires L-ascorbate as cofactor. Fe(2+) is required as a cofactor. In terms of tissue distribution, mostly expressed in tubers, and, at low levels, in underground stems, stems, leaves and petioles.

It carries out the reaction (E)-feruloyl-CoA + 2-oxoglutarate + O2 = (E)-6-hydroxyferuloyl-CoA + succinate + CO2. The protein operates within phenylpropanoid metabolism. Functionally, 2-oxoglutarate (OG)- and Fe(II)-dependent dioxygenase (2OGD) involved in scopoletin biosynthesis. Converts feruloyl CoA into 6'-hydroxyferuloyl CoA, and, at low efficiency, caffeoyl-CoA into 6'-hydroxycaffeate, but has no activity with p-coumaroyl-CoA. This chain is Feruloyl CoA ortho-hydroxylase F6H1-3, found in Ipomoea batatas (Sweet potato).